A 369-amino-acid chain; its full sequence is uncharacterized protein (369 aa).

A signal peptide spans 1–19 (MKKLIAVAVLSACGSLAHA).

This is an uncharacterized protein from Haemophilus influenzae (strain ATCC 51907 / DSM 11121 / KW20 / Rd).